The following is a 70-amino-acid chain: uncharacterized protein (70 aa).

It localises to the plastid. This is an uncharacterized protein from Euglena longa (Euglenophycean alga).